The following is a 567-amino-acid chain: Thiol:disulfide interchange protein DsbD (567 aa).

Residues 1-19 form the signal peptide; sequence MAQRIFTLILLLCSTSAFA. 2 cysteine pairs are disulfide-bonded: cysteine 122–cysteine 128 and cysteine 185–cysteine 307. A run of 8 helical transmembrane segments spans residues 166 to 186, 211 to 231, 246 to 266, 299 to 319, 326 to 346, 360 to 380, 387 to 407, and 418 to 438; these read LPFS…TPCV, LLAF…GLVV, YVLI…FGLF, IAGL…LLYI, WLGG…LMLV, WMAH…VFLL, AWGL…AFIT, and IVQI…QDWA. Residues 435 to 567 enclose the Thioredoxin domain; that stretch reads QDWAFGSPSA…FSAHLHDRQP (133 aa). Cysteine 482 and cysteine 485 are disulfide-bonded.

The protein belongs to the thioredoxin family. DsbD subfamily.

Its subcellular location is the cell inner membrane. The catalysed reaction is [protein]-dithiol + NAD(+) = [protein]-disulfide + NADH + H(+). It carries out the reaction [protein]-dithiol + NADP(+) = [protein]-disulfide + NADPH + H(+). Its function is as follows. Required to facilitate the formation of correct disulfide bonds in some periplasmic proteins and for the assembly of the periplasmic c-type cytochromes. Acts by transferring electrons from cytoplasmic thioredoxin to the periplasm. This transfer involves a cascade of disulfide bond formation and reduction steps. This chain is Thiol:disulfide interchange protein DsbD, found in Salmonella paratyphi A (strain ATCC 9150 / SARB42).